Consider the following 337-residue polypeptide: DNA-directed RNA polymerase subunit alpha (337 aa).

Residues 1 to 233 (MVREKVTVST…DLFIPFLHME (233 aa)) form an alpha N-terminal domain (alpha-NTD) region. The interval 265-337 (KKIALKSIFI…FVIDLAKNKF (73 aa)) is alpha C-terminal domain (alpha-CTD).

This sequence belongs to the RNA polymerase alpha chain family. In plastids the minimal PEP RNA polymerase catalytic core is composed of four subunits: alpha, beta, beta', and beta''. When a (nuclear-encoded) sigma factor is associated with the core the holoenzyme is formed, which can initiate transcription.

It localises to the plastid. The protein localises to the chloroplast. The enzyme catalyses RNA(n) + a ribonucleoside 5'-triphosphate = RNA(n+1) + diphosphate. DNA-dependent RNA polymerase catalyzes the transcription of DNA into RNA using the four ribonucleoside triphosphates as substrates. This chain is DNA-directed RNA polymerase subunit alpha, found in Solanum lycopersicum (Tomato).